The sequence spans 118 residues: UPF0342 protein BAMEG_3696 (118 aa).

The protein belongs to the UPF0342 family.

This Bacillus anthracis (strain CDC 684 / NRRL 3495) protein is UPF0342 protein BAMEG_3696.